We begin with the raw amino-acid sequence, 324 residues long: dITP/XTP pyrophosphatase (324 aa).

A unknown region spans residues 1–126; that stretch reads MTKSIFEYKD…SDNKSDFGDV (126 aa). Residues 127-324 form an NTP pyrophosphatase region; it reads LLIATRNEGK…EVFPAWQNKQ (198 aa). Position 131 to 136 (131 to 136) interacts with substrate; sequence TRNEGK. Asp-193 (proton acceptor) is an active-site residue. Asp-193 is a binding site for Mg(2+). Residues Ser-194, 277 to 280, Lys-300, and 305 to 306 each bind substrate; these read FGYD and HR.

It belongs to the HAM1 NTPase family. In terms of assembly, homodimer. It depends on Mg(2+) as a cofactor.

It catalyses the reaction XTP + H2O = XMP + diphosphate + H(+). The enzyme catalyses dITP + H2O = dIMP + diphosphate + H(+). The catalysed reaction is ITP + H2O = IMP + diphosphate + H(+). Pyrophosphatase that catalyzes the hydrolysis of nucleoside triphosphates to their monophosphate derivatives, with a high preference for the non-canonical purine nucleotides XTP (xanthosine triphosphate), dITP (deoxyinosine triphosphate) and ITP. Seems to function as a house-cleaning enzyme that removes non-canonical purine nucleotides from the nucleotide pool, thus preventing their incorporation into DNA/RNA and avoiding chromosomal lesions. The sequence is that of dITP/XTP pyrophosphatase from Streptococcus thermophilus (strain CNRZ 1066).